A 265-amino-acid polypeptide reads, in one-letter code: Probable trehalose-phosphate phosphatase (265 aa).

Asp-35 (nucleophile) is an active-site residue. Residues Asp-35, Asp-37, and Asp-213 each coordinate Mg(2+). 35-37 is a substrate binding site; it reads DID.

It belongs to the trehalose phosphatase family. Requires Mg(2+) as cofactor.

The catalysed reaction is alpha,alpha-trehalose 6-phosphate + H2O = alpha,alpha-trehalose + phosphate. It functions in the pathway glycan biosynthesis; trehalose biosynthesis. Its function is as follows. Removes the phosphate from trehalose 6-phosphate to produce free trehalose. The sequence is that of Probable trehalose-phosphate phosphatase (otsB) from Sinorhizobium fredii (strain NBRC 101917 / NGR234).